A 71-amino-acid chain; its full sequence is Augerpeptide-s7a (71 aa).

Residues 1–20 (MSALKFVLICGLVLLLIETI) form the signal peptide. A propeptide spanning residues 21-29 (PGVSLNLMR) is cleaved from the precursor. Disulfide bonds link Cys-36-Cys-48, Cys-42-Cys-65, and Cys-47-Cys-68.

Expressed by the venom duct.

The protein localises to the secreted. Elicits an uncoordinated twisting syndrome when injected into C.elegans, but has no effect on mice. In Terebra subulata (Chocolate spotted auger), this protein is Augerpeptide-s7a.